Consider the following 252-residue polypeptide: Phosphate import ATP-binding protein PstB (252 aa).

Positions 5–247 (MRGQDVKVFY…PKEQRTQDYI (243 aa)) constitute an ABC transporter domain. Residue 37 to 44 (GPSGCGKS) participates in ATP binding.

This sequence belongs to the ABC transporter superfamily. Phosphate importer (TC 3.A.1.7) family. The complex is composed of two ATP-binding proteins (PstB), two transmembrane proteins (PstC and PstA) and a solute-binding protein (PstS).

The protein localises to the cell inner membrane. The catalysed reaction is phosphate(out) + ATP + H2O = ADP + 2 phosphate(in) + H(+). Functionally, part of the ABC transporter complex PstSACB involved in phosphate import. Responsible for energy coupling to the transport system. The protein is Phosphate import ATP-binding protein PstB of Bartonella quintana (strain Toulouse) (Rochalimaea quintana).